The sequence spans 516 residues: MFPRLIVWLLAASAVHAVLDISNIKPKRDYENFLQKYAEYADDEVDRSVGSDITLSLKEKFVNQYLMDLKTEELKAGLKNPSQFIPSNHFFSVLDRINSSEIFKIIRRMPKGAILHAHDTALCSTDYVVSITYRDHLWQCADPKTGALQFRFSKESPKNTDTCQWTPVSEERKNQGEEQYNSKLRSQLSLYNTDPINRSRDVDSIWNDFMGLFGVNFGLLTYAPVWKDYYKQFLKEMMEDGVQYLELRGTLPPLYDLDGKIYNEEQVVEIYYNVTEEFKKENSTFIGAKFIYAPVRFVNATGIKTLTTTVKQLHERFPDFLAGFDLVGQEDKGGPLIGFSRELLELPESINFFFHSGETNWNGMTDDNLIAAVTLGTKRIGHGYALFKHPRVLKQVKKDKIAIEVCPISNQVLRLVADMRNHPGSILLANKKYPMVISSDDPSFWEATPLSHDFYMAFMGLASYHQDLRMLKQLAINSLEYSSMTLEEKTNAMKLWEAEWEKFIKELETEVFSLLE.

Positions methionine 1 to aspartate 20 are cleaved as a signal peptide.

It belongs to the metallo-dependent hydrolases superfamily. Adenosine and AMP deaminases family. ADGF subfamily. It depends on Zn(2+) as a cofactor. Salivary gland (at protein level).

It is found in the secreted. The enzyme catalyses adenosine + H2O + H(+) = inosine + NH4(+). Its function is as follows. Catalyzes the deamination of adenosine to inosine. The protein is Adenosine deaminase of Phlebotomus duboscqi (Sandfly).